Reading from the N-terminus, the 221-residue chain is Ribonuclease 3 (221 aa).

An RNase III domain is found at 4–121 (LEQLEKKLGY…LWAAVYIDSG (118 aa)). Position 40 (E40) interacts with Mg(2+). D44 is an active-site residue. Mg(2+) is bound by residues D107 and E110. Residue E110 is part of the active site. The 69-residue stretch at 151-219 (DYKTILQEIT…AEELIKLLEE (69 aa)) folds into the DRBM domain.

This sequence belongs to the ribonuclease III family. In terms of assembly, homodimer. Mg(2+) serves as cofactor.

The protein resides in the cytoplasm. The catalysed reaction is Endonucleolytic cleavage to 5'-phosphomonoester.. Digests double-stranded RNA. Involved in the processing of primary rRNA transcript to yield the immediate precursors to the large and small rRNAs (23S and 16S). Also processes some mRNAs, and tRNAs when they are encoded in the rRNA operon. Probably processes pre-crRNA and tracrRNA of type II CRISPR loci if present in the organism. The chain is Ribonuclease 3 (rnc) from Aquifex aeolicus (strain VF5).